Here is a 1744-residue protein sequence, read N- to C-terminus: Complement C4-B (1744 aa).

Positions 1-19 (MRLLWGLIWASSFFTLSLQ) are cleaved as a signal peptide. Cysteine 68 and cysteine 97 form a disulfide bridge. Residue asparagine 226 is glycosylated (N-linked (GlcNAc...) asparagine). An intrachain disulfide couples cysteine 635 to cysteine 669. Positions 676 to 679 (RKKR) are excised as a propeptide. Intrachain disulfides connect cysteine 702/cysteine 728, cysteine 703/cysteine 735, and cysteine 716/cysteine 736. Residues 702 to 736 (CCQDGVTRLPMMRSCEQRAARVQQPDCREPFLSCC) enclose the Anaphylatoxin-like domain. Asparagine 862 carries an N-linked (GlcNAc...) asparagine glycan. Phosphoserine is present on serine 918. The segment at residues 1010-1013 (CGEQ) is a cross-link (isoglutamyl cysteine thioester (Cys-Gln)). N-linked (GlcNAc...) asparagine glycans are attached at residues asparagine 1328 and asparagine 1391. Residues tyrosine 1417, tyrosine 1420, and tyrosine 1422 each carry the sulfotyrosine modification. Residues 1447–1453 (RRNRRRR) constitute a propeptide that is removed on maturation. 5 cysteine pairs are disulfide-bonded: cysteine 1471–cysteine 1535, cysteine 1583–cysteine 1588, cysteine 1595–cysteine 1673, cysteine 1618–cysteine 1742, and cysteine 1718–cysteine 1727. One can recognise an NTR domain in the interval 1595 to 1742 (CPRQRRALER…FLQEYGTQGC (148 aa)).

In terms of assembly, in absence of complement activation, circulates in blood as a disulfide-linked trimer of an alpha, beta and gamma chain. Complement C4b is composed of complement C4b-A, complement C4 beta and complement C4 gamma chains that are associated via disulfide bonds. Non-enzymatic component of the C3 convertase, also named C4bC2b, composed of the serine protease complement C2b (C2), as well as complement C4b. Non-enzymatic component of the C5 convertase, also named C4bC2bC3b, composed of the serine protease complement C2b (C2), complement C3b, as well as complement C4b. Interacts with CR1 (via Sushi 1 and Sushi 2 domains). As to quaternary structure, (Microbial infection) Binds B.burgdorferi OspC, the interaction is inhibited by complement factor C2. This binding may inhibit the complement cascade and allow the bacteria to survive in the host bloodstream. Post-translationally, prior to secretion, the single-chain precursor is enzymatically cleaved by plasminogen (PLG) to yield non-identical chains alpha, beta and gamma. During activation of the complement systems, the alpha chain is cleaved into C4a and C4b by different proteases depending on the complement pathway: C4b stays linked to the beta and gamma chains, while C4a is released in the plasma. The alpha chain is cleaved by C1S to generate C4a and C4b following activation by the classical complement system. The alpha chain is cleaved to generate C4a and C4b by MASP2 following activation by the lectin complement system. The alpha chain is cleaved by GZMK to generate C4a and C4b following activation by the GZMK complement system. Further degradation of C4b by C1 into the inactive fragments C4c and C4d blocks the generation of C3 convertase. The proteolytic cleavages often are incomplete so that many structural forms can be found in plasma. Upon activation, the internal thioester bond reacts with carbohydrate antigens on the target surface to form amide or ester bonds, leading to covalent association with the surface of pathogens. In terms of processing, complement C4b interacts with complement C3b via a thioester linkage. Post-translationally, N- and O-glycosylated. O-glycosylated with a core 1 or possibly core 8 glycan. As to expression, complement component C4 is expressed at highest levels in the liver, at moderate levels in the adrenal cortex, adrenal medulla, thyroid gland, and the kidney, and at lowest levels in the heart, ovary, small intestine, thymus, pancreas and spleen. The extra-hepatic sites of expression may be important for the local protection and inflammatory response.

The protein localises to the secreted. It is found in the synapse. It localises to the cell projection. The protein resides in the axon. Its subcellular location is the dendrite. The protein localises to the cell surface. In terms of biological role, precursor of non-enzymatic components of the classical, lectin and GZMK complement pathways, which consist in a cascade of proteins that leads to phagocytosis and breakdown of pathogens and signaling that strengthens the adaptive immune system. Functionally, non-enzymatic component of C3 and C5 convertases. Generated following cleavage by complement proteases (C1S, MASP2 or GZMK, depending on the complement pathway), it covalently attaches to the surface of pathogens, where it acts as an opsonin that marks the surface of antigens for removal. It then recruits the serine protease complement C2b to form the C3 and C5 convertases, which cleave and activate C3 and C5, respectively, the next components of the complement pathways. Complement C4b-B isotype catalyzes the transacylation of the thioester carbonyl group to form ester bonds with carbohydrate antigens, while C4b-A isotype is responsible for effective binding to form amide bonds with immune aggregates or protein antigens. Putative humoral mediator released following cleavage by complement proteases (C1S, MASP2 or GZMK, depending on the complement pathway). While it is strongly similar to anaphylatoxins, its role is unclear. Was reported to act as a mediator of local inflammatory process; however these effects were probably due to contamination with C3a and/C5a anaphylatoxins in biological assays. This chain is Complement C4-B, found in Homo sapiens (Human).